The sequence spans 329 residues: G-protein coupled receptor 3 (329 aa).

The Extracellular portion of the chain corresponds to 1-43; sequence MMWGAGRSMAWFSAGSGSVNVSIDPAEEPTGPATLLPSPRAWD. Asn-20 is a glycosylation site (N-linked (GlcNAc...) asparagine). The helical transmembrane segment at 44 to 64 threads the bilayer; sequence VVLCISGTLVSCENALVVAII. At 65–73 the chain is on the cytoplasmic side; that stretch reads VGTPAFRAP. A helical membrane pass occupies residues 74 to 94; the sequence is MFLLVGSLAVADLLAGLGLVL. Residues 95-108 lie on the Extracellular side of the membrane; sequence HFAADFCIGSPEMS. The helical transmembrane segment at 109–129 threads the bilayer; that stretch reads LVLVGVLATAFTASIGSLLAI. The Cytoplasmic segment spans residues 130–153; sequence TVDRYLSLYNALTYYSETTVTRTY. The chain crosses the membrane as a helical span at residues 154-174; it reads VMLALVWVGALGLGLVPVLAW. Residues 175–192 are Extracellular-facing; that stretch reads NCRDGLTTCGVVYPLSKN. The chain crosses the membrane as a helical span at residues 193–213; the sequence is HLVVLAIVFFMVFGIMLQLYA. The Cytoplasmic portion of the chain corresponds to 214–247; it reads QICRIVCRHAQQIALQRHLLPASHYVATRKGIAT. The helical transmembrane segment at 248-268 threads the bilayer; the sequence is LAVVLGAFAACWLPFTVYCLL. The Extracellular portion of the chain corresponds to 269–277; it reads GDANSPPLY. Residues 278–298 form a helical membrane-spanning segment; sequence TYLTLLPATYNSMINPVIYAF. Topologically, residues 299–329 are cytoplasmic; that stretch reads RNQDVQKVLWAICCCCSTSKIPFRSRSPSDV. Cys-312 carries the S-palmitoyl cysteine lipid modification. Phosphoserine is present on residues Ser-323, Ser-325, and Ser-327.

This sequence belongs to the G-protein coupled receptor 1 family. In terms of tissue distribution, abundantly expressed in granule neurons at all development stages. Enriched in the longest tips of neurites during differentiation of hippocampal neurons.

Its subcellular location is the cell membrane. Constitutively active G-protein coupled receptor that maintains high 3'-5'-cyclic adenosine monophosphate (cAMP) levels that a plays a role in serveral processes including meiotic arrest in oocytes or neuronal development via activation of numerous intracellular signaling pathways. Acts as an essential activator of thermogenic adipocytes and drives thermogenesis via its intrinsic G(s)-coupling activity without the requirement of a ligand. Has a potential role in modulating a number of brain functions, including behavioral responses to stress, amyloid-beta peptide generation in neurons. Stimulates neurite outgrowth in cerebellar granular neurons modulated via PKA, ERK, and most strongly PI3K-mediated signaling pathways. The polypeptide is G-protein coupled receptor 3 (Gpr3) (Rattus norvegicus (Rat)).